The following is a 600-amino-acid chain: Proline--tRNA ligase (600 aa).

It belongs to the class-II aminoacyl-tRNA synthetase family. ProS type 1 subfamily. Homodimer.

It is found in the cytoplasm. It carries out the reaction tRNA(Pro) + L-proline + ATP = L-prolyl-tRNA(Pro) + AMP + diphosphate. Catalyzes the attachment of proline to tRNA(Pro) in a two-step reaction: proline is first activated by ATP to form Pro-AMP and then transferred to the acceptor end of tRNA(Pro). As ProRS can inadvertently accommodate and process non-cognate amino acids such as alanine and cysteine, to avoid such errors it has two additional distinct editing activities against alanine. One activity is designated as 'pretransfer' editing and involves the tRNA(Pro)-independent hydrolysis of activated Ala-AMP. The other activity is designated 'posttransfer' editing and involves deacylation of mischarged Ala-tRNA(Pro). The misacylated Cys-tRNA(Pro) is not edited by ProRS. This Prochlorococcus marinus (strain MIT 9515) protein is Proline--tRNA ligase.